A 122-amino-acid polypeptide reads, in one-letter code: Large ribosomal subunit protein uL14 (122 aa).

Belongs to the universal ribosomal protein uL14 family. Part of the 50S ribosomal subunit. Forms a cluster with proteins L3 and L19. In the 70S ribosome, L14 and L19 interact and together make contacts with the 16S rRNA in bridges B5 and B8.

In terms of biological role, binds to 23S rRNA. Forms part of two intersubunit bridges in the 70S ribosome. This Geobacillus thermodenitrificans (strain NG80-2) protein is Large ribosomal subunit protein uL14.